A 180-amino-acid polypeptide reads, in one-letter code: Mitochondrial inner membrane protease subunit 2 (180 aa).

The helical transmembrane segment at 19-39 (LVGITLWVPVLMFVEQHVVSV) threads the bilayer. Catalysis depends on residues serine 46 and lysine 92.

Belongs to the peptidase S26 family. IMP2 subfamily. As to quaternary structure, heterodimer of 2 subunits, imp1 and imp2.

It is found in the mitochondrion inner membrane. In terms of biological role, catalyzes the removal of transit peptides required for the targeting of proteins from the mitochondrial matrix, across the inner membrane, into the inter-membrane space. The sequence is that of Mitochondrial inner membrane protease subunit 2 from Schizosaccharomyces pombe (strain 972 / ATCC 24843) (Fission yeast).